The chain runs to 363 residues: p21-activated protein kinase-interacting protein 1-like (363 aa).

WD repeat units follow at residues 38–75 (AHTASVSVLAVNNRFVATGSRDETIQIYDMKKKVEHGA), 78–116 (HHNGTITCLEFYGNTHLLSGAEDGLICVWNTKKWECQQT), 119–158 (AHKGQVLSLSIHPSGKLALSVGTDKTLRTWNLVEGRSAFI), 200–238 (NNPKRISSAQFITDALIAVAGDEEVIRLYDTASQKCVCE), and 241–282 (AHEN…VQTS). The interval 309 to 363 (KEKSNTAVTASAVKDCDRPKKKKAQNETTDKEASETQVVHKKRKPETKQKKKKPS) is disordered. Basic and acidic residues predominate over residues 322 to 342 (KDCDRPKKKKAQNETTDKEAS). The span at 347-363 (VHKKRKPETKQKKKKPS) shows a compositional bias: basic residues.

It is found in the nucleus. It localises to the nucleolus. Its function is as follows. Negatively regulates the PAK1 kinase. PAK1 is a member of the PAK kinase family, which has been shown to play a positive role in the regulation of signaling pathways involving MAPK8 and RELA. PAK1 exists as an inactive homodimer, which is activated by binding of small GTPases such as CDC42 to an N-terminal regulatory domain. PAK1IP1 also binds to the N-terminus of PAK1, and inhibits the specific activation of PAK1 by CDC42. May be involved in ribosomal large subunit assembly. The polypeptide is p21-activated protein kinase-interacting protein 1-like (pak1ip1) (Xenopus laevis (African clawed frog)).